A 466-amino-acid chain; its full sequence is ATP synthase subunit beta (466 aa).

152–159 lines the ATP pocket; it reads GGAGVGKT.

It belongs to the ATPase alpha/beta chains family. In terms of assembly, F-type ATPases have 2 components, CF(1) - the catalytic core - and CF(0) - the membrane proton channel. CF(1) has five subunits: alpha(3), beta(3), gamma(1), delta(1), epsilon(1). CF(0) has three main subunits: a(1), b(2) and c(9-12). The alpha and beta chains form an alternating ring which encloses part of the gamma chain. CF(1) is attached to CF(0) by a central stalk formed by the gamma and epsilon chains, while a peripheral stalk is formed by the delta and b chains.

It localises to the cell inner membrane. The enzyme catalyses ATP + H2O + 4 H(+)(in) = ADP + phosphate + 5 H(+)(out). Produces ATP from ADP in the presence of a proton gradient across the membrane. The catalytic sites are hosted primarily by the beta subunits. The chain is ATP synthase subunit beta from Sulfurovum sp. (strain NBC37-1).